Consider the following 523-residue polypeptide: 2-isopropylmalate synthase (523 aa).

Positions 5–267 (VIIFDTTLRD…ETGINAKEIH (263 aa)) constitute a Pyruvate carboxyltransferase domain. Mn(2+)-binding residues include D14, H202, H204, and N238. Residues 392 to 523 (KLAQLVVHSD…QKDRSELGGV (132 aa)) form a regulatory domain region.

This sequence belongs to the alpha-IPM synthase/homocitrate synthase family. LeuA type 1 subfamily. As to quaternary structure, homodimer. The cofactor is Mn(2+).

It is found in the cytoplasm. It carries out the reaction 3-methyl-2-oxobutanoate + acetyl-CoA + H2O = (2S)-2-isopropylmalate + CoA + H(+). The protein operates within amino-acid biosynthesis; L-leucine biosynthesis; L-leucine from 3-methyl-2-oxobutanoate: step 1/4. Catalyzes the condensation of the acetyl group of acetyl-CoA with 3-methyl-2-oxobutanoate (2-ketoisovalerate) to form 3-carboxy-3-hydroxy-4-methylpentanoate (2-isopropylmalate). The chain is 2-isopropylmalate synthase from Shewanella sediminis (strain HAW-EB3).